The following is a 468-amino-acid chain: Zinc finger protein mex-5 (468 aa).

Residues 1-19 (MKAASNSVSSAGGSVSPTT) are compositionally biased toward low complexity. The disordered stretch occupies residues 1–32 (MKAASNSVSSAGGSVSPTTTQPPLPPGQSSHP). At Thr-186 the chain carries Phosphothreonine; by mbk-2. Over residues 243–254 (NHFHEHRGEKFG) the composition is skewed to basic and acidic residues. The tract at residues 243 to 269 (NHFHEHRGEKFGRRGFPIPETDSQQPP) is disordered. 2 C3H1-type zinc fingers span residues 270-299 (NYKT…HGLK) and 314-344 (KYKT…HPTD). Residues 414–468 (DLQAGGDYNQPESNEDDLPPHLRRNRRENPPMNKRRTSLSTKWTSEENLGLRGHY) are disordered. Positions 451 to 460 (SLSTKWTSEE) are enriched in polar residues. Ser-458 is modified (phosphoserine).

As to quaternary structure, interacts (when phosphorylated on Thr-186) with plk-1 (via POLO box domain) and plk-2 (via POLO box domain). Phosphorylation on Ser-458 by par-1 promotes localization of the protein to the anterior cytoplasm of the zygote. Phosphorylation by mbk-1 appears to be required for subsequent phosphorylation by plk-1. Asymmetrically localized to the anterior of the zygote before mitotic division, then differentially distributed to the somatic blastomere precursor cells.

It localises to the cytoplasm. Functions with mex-6 to affect embryonic viability, establish soma germline asymmetry in embryos and establish plk-1, pie-1, mex-1, and pos-1 asymmetry in embryos. Also affects formation of intestinal cells. Binds to mRNA in vitro, and inhibits pgl-3-mediated P-granule formation, probably by competing with pgl-3 for binding to mRNA. Required for neg-1 expression in anterior blastomeres during embryogenesis. The sequence is that of Zinc finger protein mex-5 from Caenorhabditis elegans.